The chain runs to 29 residues: Cycloviolacin-O21 (29 aa).

A cross-link (cyclopeptide (Gly-Asn)) is located at residues 1–29 (GLPVCGETCVTGSCYTPGCTCSWPVCTRN). 3 cysteine pairs are disulfide-bonded: C5–C19, C9–C21, and C14–C26.

This is a cyclic peptide. In terms of tissue distribution, expressed in leaves, petals, petioles, and runners but not in roots (at protein level).

Functionally, probably participates in a plant defense mechanism. The protein is Cycloviolacin-O21 of Viola odorata (Sweet violet).